A 264-amino-acid chain; its full sequence is ORC1-type DNA replication protein 2 (264 aa).

ATP-binding positions include 73–77, tyrosine 220, and arginine 232; that span reads TGKSL.

Belongs to the CDC6/cdc18 family.

In terms of biological role, involved in regulation of DNA replication. The chain is ORC1-type DNA replication protein 2 (orc2) from Halobacterium salinarum (strain ATCC 700922 / JCM 11081 / NRC-1) (Halobacterium halobium).